A 1067-amino-acid chain; its full sequence is Receptor-type guanylate cyclase gcy-10 (1067 aa).

Residues Met-1–Gly-20 form the signal peptide. The Extracellular segment spans residues Ile-21 to Tyr-438. An N-linked (GlcNAc...) asparagine glycan is attached at Asn-411. The helical transmembrane segment at Ile-439 to Ile-459 threads the bilayer. Residues Val-460–Ala-1067 are Cytoplasmic-facing. The 283-residue stretch at Ala-509–Ser-791 folds into the Protein kinase domain. ATP-binding positions include Arg-515 to Val-523 and Lys-534. A Guanylate cyclase domain is found at Thr-859–Gln-989.

It belongs to the adenylyl cyclase class-4/guanylyl cyclase family. As to expression, expressed predominantly in AWC but also in AWB, ASI, ASJ and ASK sensory neurons and in I1 interneuron.

It is found in the cell membrane. The protein resides in the cell projection. The protein localises to the cilium. The enzyme catalyses GTP = 3',5'-cyclic GMP + diphosphate. Functionally, guanylate cyclase involved in the production of the second messenger cGMP. Regulates chemotaxis responses toward volatile odorants in AWC sensory neurons and their avoidance in AWB sensory neurons. May be involved in sensitivity to quinine by regulating egl-4 activity through the production of cGMP. Involved in phototransduction in ASJ neurons downstream of G protein coupled-photoreceptor lite-1. Required to maintain the expression of putative olfactory receptor str-2 in AWC neurons in adults. In AWB and AWC sensory neurons, mediates the recognition of food oders which subsequently allows for the detection of preferred food sources. Involved in AWB sensory neuron development and extension during postembryonic development, potentially via mediating localization of tub-1 and PI(4,5)P2 to membrane cilia. This chain is Receptor-type guanylate cyclase gcy-10, found in Caenorhabditis elegans.